The following is a 418-amino-acid chain: Glutamyl-tRNA reductase (418 aa).

Residues 49–52, Ser109, 114–116, and Gln120 each bind substrate; these read TCNR and EPQ. The active-site Nucleophile is Cys50. An NADP(+)-binding site is contributed by 189 to 194; sequence GAGETI.

It belongs to the glutamyl-tRNA reductase family. Homodimer.

The enzyme catalyses (S)-4-amino-5-oxopentanoate + tRNA(Glu) + NADP(+) = L-glutamyl-tRNA(Glu) + NADPH + H(+). Its pathway is porphyrin-containing compound metabolism; protoporphyrin-IX biosynthesis; 5-aminolevulinate from L-glutamyl-tRNA(Glu): step 1/2. In terms of biological role, catalyzes the NADPH-dependent reduction of glutamyl-tRNA(Glu) to glutamate 1-semialdehyde (GSA). In Escherichia coli O139:H28 (strain E24377A / ETEC), this protein is Glutamyl-tRNA reductase.